We begin with the raw amino-acid sequence, 442 residues long: MINKLYIRTFGCQMNEYDSNKMVDILKHSHDLTLTDDATSADVLLLNTCSIREKAQDKLFHQLGRWSKLKNKNPNLIIGVGGCVASQEGELILKRTPYVDIIFGPQTLHRLPNMLNDALNNKKTSIDISFPEIEKFDHLPKPRTNSVTAFVSIMEGCSKYCTFCIVPYTRGEEISRPFNDVINEVKILASQGVREINLLGQNVNAYQGSMNDGEVSDLALLINIVAKISGIKRIRYTTSHPNQFSDSLIEAYAEVPELVSHLHLPVQSGSDKILRLMKRGYMSIEYKSKIRKLRKIRPDISISSDFIIGFPGENEKDFLDTMILIDEIGFDKSFSFIYSVRPGTPAASYPDDIDIQVKKQRLALIQKTINNNTEHISQLMIGSIQKVLVENITKKGNELFGRTENMRNTHFKGDKSLIGQIVNVKITKGRGNSLMGDLLTQI.

One can recognise an MTTase N-terminal domain in the interval 3 to 120; that stretch reads NKLYIRTFGC…LPNMLNDALN (118 aa). Residues Cys-12, Cys-49, Cys-83, Cys-157, Cys-161, and Cys-164 each contribute to the [4Fe-4S] cluster site. Positions 143–375 constitute a Radical SAM core domain; sequence RTNSVTAFVS…QKTINNNTEH (233 aa). Residues 378–440 form the TRAM domain; the sequence is QLMIGSIQKV…GNSLMGDLLT (63 aa).

It belongs to the methylthiotransferase family. MiaB subfamily. Monomer. [4Fe-4S] cluster is required as a cofactor.

It localises to the cytoplasm. The catalysed reaction is N(6)-dimethylallyladenosine(37) in tRNA + (sulfur carrier)-SH + AH2 + 2 S-adenosyl-L-methionine = 2-methylsulfanyl-N(6)-dimethylallyladenosine(37) in tRNA + (sulfur carrier)-H + 5'-deoxyadenosine + L-methionine + A + S-adenosyl-L-homocysteine + 2 H(+). Its function is as follows. Catalyzes the methylthiolation of N6-(dimethylallyl)adenosine (i(6)A), leading to the formation of 2-methylthio-N6-(dimethylallyl)adenosine (ms(2)i(6)A) at position 37 in tRNAs that read codons beginning with uridine. The chain is tRNA-2-methylthio-N(6)-dimethylallyladenosine synthase from Vesicomyosocius okutanii subsp. Calyptogena okutanii (strain HA).